The following is a 99-amino-acid chain: Integration host factor subunit alpha (99 aa).

The tract at residues 51–71 (NFDLRDKNQRPGRNPKTGEDI) is disordered.

It belongs to the bacterial histone-like protein family. In terms of assembly, heterodimer of an alpha and a beta chain.

In terms of biological role, this protein is one of the two subunits of integration host factor, a specific DNA-binding protein that functions in genetic recombination as well as in transcriptional and translational control. The sequence is that of Integration host factor subunit alpha (ihfA) from Dickeya dadantii (strain 3937) (Erwinia chrysanthemi (strain 3937)).